The sequence spans 498 residues: Protein flp (498 aa).

The next 4 membrane-spanning stretches (helical) occupy residues 6 to 26 (LYFL…IYIT), 389 to 409 (FNIV…FSAY), 433 to 453 (LSLC…YLIL), and 471 to 491 (LALI…LLFL).

The protein resides in the cell membrane. Its function is as follows. Its precise function is unknown. Has no penicillin-binding activity and is not involved in methicillin resistance. This Staphylococcus aureus (strain NCTC 8325 / PS 47) protein is Protein flp (flp).